Consider the following 423-residue polypeptide: Anhydromevalonate phosphate decarboxylase (423 aa).

The Mn(2+) site is built by Asn134 and Glu197. Asp245 functions as the Proton acceptor in the catalytic mechanism.

Belongs to the UbiD family. Prenylated FMN is required as a cofactor. The cofactor is Mn(2+).

It catalyses the reaction (2E)-3-methyl-5-phosphooxypent-2-enoate + H(+) = isopentenyl phosphate + CO2. It participates in isoprenoid biosynthesis; isopentenyl diphosphate biosynthesis via mevalonate pathway. Catalyzes the conversion of trans-anhydromevalonate 5-phosphate (tAHMP) into isopentenyl phosphate. Involved in the archaeal mevalonate (MVA) pathway, which provides fundamental precursors for isoprenoid biosynthesis, such as isopentenyl diphosphate (IPP) and dimethylallyl diphosphate (DMAPP). This is Anhydromevalonate phosphate decarboxylase from Methanothermobacter thermautotrophicus (strain ATCC 29096 / DSM 1053 / JCM 10044 / NBRC 100330 / Delta H) (Methanobacterium thermoautotrophicum).